Reading from the N-terminus, the 799-residue chain is Protein translocase subunit SecA (799 aa).

Residues glutamine 85, 103 to 107, and aspartate 504 contribute to the ATP site; that span reads GEGKT.

Belongs to the SecA family. As to quaternary structure, monomer and homodimer. Part of the essential Sec protein translocation apparatus which comprises SecA, SecYEG and auxiliary proteins SecDF. Other proteins may also be involved.

The protein localises to the cell membrane. Its subcellular location is the cytoplasm. The enzyme catalyses ATP + H2O + cellular proteinSide 1 = ADP + phosphate + cellular proteinSide 2.. Its function is as follows. Part of the Sec protein translocase complex. Interacts with the SecYEG preprotein conducting channel. Has a central role in coupling the hydrolysis of ATP to the transfer of proteins into and across the cell membrane, serving as an ATP-driven molecular motor driving the stepwise translocation of polypeptide chains across the membrane. This is Protein translocase subunit SecA from Lactobacillus acidophilus (strain ATCC 700396 / NCK56 / N2 / NCFM).